The following is a 410-amino-acid chain: Tryptophan synthase beta chain (410 aa).

The residue at position 98 (Lys98) is an N6-(pyridoxal phosphate)lysine.

Belongs to the TrpB family. As to quaternary structure, tetramer of two alpha and two beta chains. Pyridoxal 5'-phosphate serves as cofactor.

It catalyses the reaction (1S,2R)-1-C-(indol-3-yl)glycerol 3-phosphate + L-serine = D-glyceraldehyde 3-phosphate + L-tryptophan + H2O. It functions in the pathway amino-acid biosynthesis; L-tryptophan biosynthesis; L-tryptophan from chorismate: step 5/5. Functionally, the beta subunit is responsible for the synthesis of L-tryptophan from indole and L-serine. This Dinoroseobacter shibae (strain DSM 16493 / NCIMB 14021 / DFL 12) protein is Tryptophan synthase beta chain.